Here is a 556-residue protein sequence, read N- to C-terminus: Phosphoglucomutase (556 aa).

2 residues coordinate alpha-D-glucose 1,6-bisphosphate: arginine 22 and serine 114. The active-site Phosphoserine intermediate is the serine 114. Serine 114, aspartate 279, aspartate 281, and aspartate 283 together coordinate Mg(2+). Serine 114 carries the phosphoserine modification. Positions 283, 284, 347, 366, 368, and 379 each coordinate alpha-D-glucose 1,6-bisphosphate.

The protein belongs to the phosphohexose mutase family. Monomer. Mg(2+) serves as cofactor.

It localises to the cytoplasm. It carries out the reaction alpha-D-glucose 1-phosphate = alpha-D-glucose 6-phosphate. The catalysed reaction is O-phospho-L-seryl-[protein] + alpha-D-glucose 1-phosphate = alpha-D-glucose 1,6-bisphosphate + L-seryl-[protein]. The enzyme catalyses alpha-D-glucose 1,6-bisphosphate + L-seryl-[protein] = O-phospho-L-seryl-[protein] + alpha-D-glucose 6-phosphate. Catalyzes the reversible isomerization of alpha-D-glucose 1-phosphate to alpha-D-glucose 6-phosphate. The mechanism proceeds via the intermediate compound alpha-D-glucose 1,6-bisphosphate. Key enzyme in hexose metabolism. The reverse reaction is an essential step for biosynthesis because glucose 1-phosphate is the starting point for the synthesis of UDP-glucose, which acts as a precursor for the synthesis of oligosaccharides and trehalose. The protein is Phosphoglucomutase (pgmB) of Emericella nidulans (strain FGSC A4 / ATCC 38163 / CBS 112.46 / NRRL 194 / M139) (Aspergillus nidulans).